The following is a 322-amino-acid chain: MTIVNRIRTDVVNVAKSFGAEYSEAVIDQIFQGFGEKFTNTGFAIRVQNKRNQKVDCNIRYGEAKENCLAWDIARESGLLSDQGHPVDTLIQEMFQAIPAIAYGADFDINYGLVKIWHLPKIVPVEEAFKIPSLPKSVNAHIDFFKKYHLDALCALTVDYRNKSTNLYFDAHHPEQRTTQFYKNILQSQQFEVPSDEVLEILVNCPEIAVTFNWSSPGIERMCFYTAFVNRETVPQHINPVLKKFAQEAPALLDNPGFLVGWSFGPDAKKGTYIKIDVDYHGLVVPSFFHMHNLPLPIPEANSVFDLPSSDTEDKLNSIVMS.

Dimethylallyl diphosphate contacts are provided by Arg46, Arg60, Lys115, Asn166, Tyr168, Arg221, Tyr225, and Lys275.

It belongs to the aromatic prenyltransferase family.

The catalysed reaction is hapalindole G + dimethylallyl diphosphate = ambiguine A + diphosphate. It catalyses the reaction hapalindole U + dimethylallyl diphosphate + H(+) = ambiguine H + diphosphate. Its activity is regulated as follows. Activity is slightly increased in the presence of Mg(2+). Prenyltransferase involved in the biosynthesis of ambiguines, a family of hapalindole-type alkaloids. Catalyzes the reverse prenylation of hapalindole G or U at the C2 position with dimethylallyl diphosphate (DMAPP) to generate ambiguine A or H, respectively. In addition, accepts hapalindole A, an epimer of hapalindole G, and catalyzes normal prenylation at its C2 position. In Fischerella ambigua (strain UTEX 1903), this protein is Hapalindole dimethylallyltransferase.